The primary structure comprises 160 residues: Putative UPF0479 protein YLR466C-A (160 aa).

The next 2 membrane-spanning stretches (helical) occupy residues 39–59 (IVFC…KVLQ) and 136–156 (VPMI…ISQH).

It belongs to the UPF0479 family.

It is found in the membrane. This Saccharomyces cerevisiae (strain ATCC 204508 / S288c) (Baker's yeast) protein is Putative UPF0479 protein YLR466C-A.